Here is an 832-residue protein sequence, read N- to C-terminus: Protein P (832 aa).

A terminal protein domain (TP) region spans residues Met-1–Gln-177. Positions Glu-178–Leu-335 are spacer. Positions Lys-208 to Ser-224 are enriched in low complexity. Residues Lys-208 to Arg-241 form a disordered region. The polymerase/reverse transcriptase domain (RT) stretch occupies residues Glu-336–Gln-679. A Reverse transcriptase domain is found at Glu-346–Ile-589. Residues Asp-418, Asp-540, and Asp-541 each coordinate Mg(2+).

The protein belongs to the hepadnaviridae P protein family.

The catalysed reaction is DNA(n) + a 2'-deoxyribonucleoside 5'-triphosphate = DNA(n+1) + diphosphate. It catalyses the reaction Endonucleolytic cleavage to 5'-phosphomonoester.. Its activity is regulated as follows. Activated by host HSP70 and HSP40 in vitro to be able to bind the epsilon loop of the pgRNA. Because deletion of the RNase H region renders the protein partly chaperone-independent, the chaperones may be needed indirectly to relieve occlusion of the RNA-binding site by this domain. Inhibited by several reverse-transcriptase inhibitors: Lamivudine, Adefovir and Entecavir. Its function is as follows. Multifunctional enzyme that converts the viral RNA genome into dsDNA in viral cytoplasmic capsids. This enzyme displays a DNA polymerase activity that can copy either DNA or RNA templates, and a ribonuclease H (RNase H) activity that cleaves the RNA strand of RNA-DNA heteroduplexes in a partially processive 3'- to 5'-endonucleasic mode. Neo-synthesized pregenomic RNA (pgRNA) are encapsidated together with the P protein, and reverse-transcribed inside the nucleocapsid. Initiation of reverse-transcription occurs first by binding the epsilon loop on the pgRNA genome, and is initiated by protein priming, thereby the 5'-end of (-)DNA is covalently linked to P protein. Partial (+)DNA is synthesized from the (-)DNA template and generates the relaxed circular DNA (RC-DNA) genome. After budding and infection, the RC-DNA migrates in the nucleus, and is converted into a plasmid-like covalently closed circular DNA (cccDNA). The activity of P protein does not seem to be necessary for cccDNA generation, and is presumably released from (+)DNA by host nuclear DNA repair machinery. The protein is Protein P of Gibbon hepatitis B virus subtype ayw3q (isolate Hope) (HBVgbn).